Reading from the N-terminus, the 156-residue chain is Small ribosomal subunit protein uS7 (156 aa).

It belongs to the universal ribosomal protein uS7 family. As to quaternary structure, part of the 30S ribosomal subunit. Contacts proteins S9 and S11.

Its function is as follows. One of the primary rRNA binding proteins, it binds directly to 16S rRNA where it nucleates assembly of the head domain of the 30S subunit. Is located at the subunit interface close to the decoding center, probably blocks exit of the E-site tRNA. This Staphylococcus aureus (strain bovine RF122 / ET3-1) protein is Small ribosomal subunit protein uS7.